The sequence spans 356 residues: Cdc42 effector protein 4 (356 aa).

An N6-methyllysine modification is found at Lys5. A Phosphoserine modification is found at Ser18. A CRIB domain is found at 27-41 (ISAPLGDFRHTMHVG). Positions 51–102 (SFLNSKAGEPDGESLDEQPSSSSSKRSLLSRKFRGSKRSQSVTRGEREQRDM) are disordered. Ser64 carries the post-translational modification Phosphoserine. The segment covering 78-87 (LLSRKFRGSK) has biased composition (basic residues). A phosphoserine mark is found at Ser105, Ser109, and Ser118. Disordered regions lie at residues 122–182 (LNEK…LDEQ) and 257–356 (VAAP…EIRV). The segment covering 123–132 (NEKEAAEKGT) has biased composition (basic and acidic residues). Residues 133–143 (SKLPKSLSSSP) show a composition bias toward low complexity. Phosphoserine occurs at positions 138, 140, 142, 174, 292, and 295. Residues 287-315 (AAAAPSPGSARSMGSHTTRDSSSLSSCTS) are compositionally biased toward low complexity. A compositionally biased stretch (basic and acidic residues) spans 318-344 (LEERSPAFRGPDRARAAVSRQPDKEFS). Over residues 345–356 (FMDEEEEDEIRV) the composition is skewed to acidic residues.

Belongs to the BORG/CEP family. As to quaternary structure, interacts with CDC42 and RHOQ, in a GTP-dependent manner. As to expression, not detected in any of the adult tissues tested. May be expressed only in fetal or embryonic tissues.

The protein localises to the endomembrane system. It is found in the cytoplasm. The protein resides in the cytoskeleton. Functionally, probably involved in the organization of the actin cytoskeleton. May act downstream of CDC42 to induce actin filament assembly leading to cell shape changes. Induces pseudopodia formation, when overexpressed in fibroblasts. This chain is Cdc42 effector protein 4 (CDC42EP4), found in Homo sapiens (Human).